Reading from the N-terminus, the 219-residue chain is Ribosomal RNA small subunit methyltransferase Nep1 (219 aa).

Residues glycine 178, glycine 183, and 196-201 (LYKAPL) contribute to the S-adenosyl-L-methionine site.

The protein belongs to the class IV-like SAM-binding methyltransferase superfamily. RNA methyltransferase NEP1 family. Homodimer.

The enzyme catalyses a pseudouridine in rRNA + S-adenosyl-L-methionine = an N(1)-methylpseudouridine in rRNA + S-adenosyl-L-homocysteine + H(+). Methyltransferase involved in ribosomal biogenesis. Specifically catalyzes the N1-methylation of the pseudouridine corresponding to position 914 in M.jannaschii 16S rRNA. This Thermococcus onnurineus (strain NA1) protein is Ribosomal RNA small subunit methyltransferase Nep1.